We begin with the raw amino-acid sequence, 223 residues long: Endonuclease V (223 aa).

Residues Asp-35 and Asp-103 each coordinate Mg(2+).

Belongs to the endonuclease V family. The cofactor is Mg(2+).

The protein resides in the cytoplasm. It carries out the reaction Endonucleolytic cleavage at apurinic or apyrimidinic sites to products with a 5'-phosphate.. Functionally, DNA repair enzyme involved in the repair of deaminated bases. Selectively cleaves double-stranded DNA at the second phosphodiester bond 3' to a deoxyinosine leaving behind the intact lesion on the nicked DNA. This Cronobacter sakazakii (strain ATCC BAA-894) (Enterobacter sakazakii) protein is Endonuclease V.